The following is a 283-amino-acid chain: Polyprenyl-phosphate transporter (283 aa).

The next 9 helical transmembrane spans lie at 27-47 (GTIA…SGIF), 51-71 (FWPS…AMGS), 85-105 (IPTM…LLKI), 112-132 (FTTK…VITL), 148-168 (TSLI…MLLP), 169-189 (GISG…MLAI), 197-217 (FAGL…FIIS), 230-250 (LMTF…VFPG), and 255-275 (IVMW…SLTL).

Belongs to the PopT family.

The protein localises to the cell membrane. With respect to regulation, active in alkaline conditions. In terms of biological role, flippase that catalyzes the transport of undecaprenyl phosphate (UndP) across the cytoplasmic membrane, from the external side to the cytoplasmic side. Is involved in UndP recycling during peptidoglycan synthesis. Necessary for peptidoglycan maintenance. The chain is Polyprenyl-phosphate transporter from Staphylococcus aureus (strain NCTC 8325 / PS 47).